The primary structure comprises 263 residues: uncharacterized protein (263 aa).

To B.subtilis soj.

This is an uncharacterized protein from Pseudomonas putida (strain ATCC 47054 / DSM 6125 / CFBP 8728 / NCIMB 11950 / KT2440).